A 98-amino-acid chain; its full sequence is MKVTTIIAALLSVAVVDAQNNAQCRKLGLPCHATKTIPYVVKKGDTLTHIAHDIYKRKVGICDLAYTNHIGKNPNLIYAGQTLLIPTDCKTIDDGSCL.

An N-terminal signal peptide occupies residues 1–18 (MKVTTIIAALLSVAVVDA). 2 disulfides stabilise this stretch: Cys-31-Cys-89 and Cys-62-Cys-97. Residues 37–85 (IPYVVKKGDTLTHIAHDIYKRKVGICDLAYTNHIGKNPNLIYAGQTLLI) enclose the LysM domain. Chitin is bound by residues Gly-44, Thr-48, Asn-75, and Ile-77.

The protein belongs to the secreted LysM effector family. In terms of assembly, forms homodimers in a chitin-independent manner through interactions at the N-termini of Mgx1LysM monomers. Homodimers are further polymerized in a chitin-dependent manner.

The protein resides in the secreted. It is found in the cell wall. Its function is as follows. Secreted effector that enables the plant pathogenic fungus to manipulate host defenses for successful infection. Binds chitin and suppresses the chitin-induced reactive oxygen species (ROS) burst. Chitin-induced polymerization of homodimers forms a contiguous Mg1LysM highly oligomeric super-complexe that is anchored to the chitin in the fungal cell wall to prevent hydrolysis by host chitinases. This is Secreted LysM effector Mgx1LysM from Zymoseptoria tritici (strain ST99CH_3D7).